The primary structure comprises 166 residues: Coiled-coil domain-containing protein 12 (166 aa).

An N-acetylmethionine modification is found at M1. A coiled-coil region spans residues V8 to K28. The segment covering R21 to K53 has biased composition (basic and acidic residues). The disordered stretch occupies residues R21 to R55. K53 is subject to N6-acetyllysine. Residue K94 forms a Glycyl lysine isopeptide (Lys-Gly) (interchain with G-Cter in SUMO2) linkage. A coiled-coil region spans residues D115–K144. A disordered region spans residues Q146–D166. 2 positions are modified to phosphoserine: S149 and S165.

In Mus musculus (Mouse), this protein is Coiled-coil domain-containing protein 12 (Ccdc12).